The sequence spans 381 residues: Dual specificity protein phosphatase 6 (381 aa).

A Rhodanese domain is found at 30 to 148; sequence GNERLLLMDC…FQAEFSLHCE (119 aa). The interval 176–203 is disordered; the sequence is SSSDIESDLDRDPNSATDSDGSPLSNSQ. The segment covering 189–203 has biased composition (polar residues); sequence NSATDSDGSPLSNSQ. Residues 206-349 enclose the Tyrosine-protein phosphatase domain; that stretch reads FPVEILPFLY…LLDFERTLGL (144 aa). Catalysis depends on Cys293, which acts as the Phosphocysteine intermediate.

This sequence belongs to the protein-tyrosine phosphatase family. Non-receptor class dual specificity subfamily. Interacts with MAPK1/ERK2. Ubiquitinated by the SCF(FBXO31) complex, leading to its proteasomal degradation. As to expression, expressed in keratinocytes (at protein level).

The protein resides in the cytoplasm. It carries out the reaction O-phospho-L-tyrosyl-[protein] + H2O = L-tyrosyl-[protein] + phosphate. The catalysed reaction is O-phospho-L-seryl-[protein] + H2O = L-seryl-[protein] + phosphate. It catalyses the reaction O-phospho-L-threonyl-[protein] + H2O = L-threonyl-[protein] + phosphate. Dual specificity protein phosphatase, which mediates dephosphorylation and inactivation of MAP kinases. Has a specificity for the ERK family. Plays an important role in alleviating chronic postoperative pain. Necessary for the normal dephosphorylation of the long-lasting phosphorylated forms of spinal MAPK1/3 and MAP kinase p38 induced by peripheral surgery, which drives the resolution of acute postoperative allodynia. Also important for dephosphorylation of MAPK1/3 in local wound tissue, which further contributes to resolution of acute pain. Promotes cell differentiation by regulating MAPK1/MAPK3 activity and regulating the expression of AP1 transcription factors. The sequence is that of Dual specificity protein phosphatase 6 (DUSP6) from Homo sapiens (Human).